Here is a 113-residue protein sequence, read N- to C-terminus: RING-box protein 2 (113 aa).

Residues Met1–Gly26 form a disordered region. Ala2 carries the N-acetylalanine modification. Residues Cys50, Cys53, Cys61, Cys64, Cys73, Cys80, His82, His85, Cys87, Cys88, Cys99, and Cys102 each contribute to the Zn(2+) site. Residues Cys61–Gln103 form an RING-type zinc finger.

The protein belongs to the RING-box family. In terms of assembly, catalytic component of multiple cullin-5-RING E3 ubiquitin-protein ligase complexes (ECS complexes, also named CRL5 complexes) composed of CUL5, Elongin BC (ELOB and ELOC), RNF7/RBX2 and a variable SOCS box domain-containing protein as substrate-specific recognition component. Also interacts (with lower preference) with CUL1, CUL2, CUL3, CUL4A and CUL4B; additional evidence is however required to confirm this result in vivo. Interacts with UBE2F. Interacts with CSNK2B, the interaction is not affected by phosphorylation by CK2. May also interact with DCUN1D1, DCUN1D2, DCUN1D3, DCUN1D4 and DCUN1D5.

It localises to the cytoplasm. The protein resides in the nucleus. The catalysed reaction is S-ubiquitinyl-[E2 ubiquitin-conjugating enzyme]-L-cysteine + [acceptor protein]-L-lysine = [E2 ubiquitin-conjugating enzyme]-L-cysteine + N(6)-ubiquitinyl-[acceptor protein]-L-lysine.. It catalyses the reaction S-[NEDD8-protein]-yl-[E2 NEDD8-conjugating enzyme]-L-cysteine + [cullin]-L-lysine = [E2 NEDD8-conjugating enzyme]-L-cysteine + N(6)-[NEDD8-protein]-yl-[cullin]-L-lysine.. It functions in the pathway protein modification; protein ubiquitination. It participates in protein modification; protein neddylation. Its function is as follows. Catalytic component of multiple cullin-5-RING E3 ubiquitin-protein ligase complexes (ECS complexes), which mediate the ubiquitination and subsequent proteasomal degradation of target proteins. It is thereby involved in various biological processes, such as cell cycle progression, signal transduction and transcription. The functional specificity of the E3 ubiquitin-protein ligase ECS complexes depend on the variable SOCS box-containing substrate recognition component. Within ECS complexes, RNF7/RBX2 recruits the E2 ubiquitination enzyme to the complex via its RING-type and brings it into close proximity to the substrate. Catalytic subunit of various SOCS-containing ECS complexes, such as the ECS(SOCS7) complex, that regulate reelin signaling by mediating ubiquitination and degradation of DAB1. The ECS(SOCS2) complex mediates the ubiquitination and subsequent proteasomal degradation of phosphorylated EPOR and GHR. Promotes ubiquitination and degradation of NF1, thereby regulating Ras protein signal transduction. As part of the ECS(ASB9) complex, catalyzes ubiquitination and degradation of CKB. The ECS(SPSB3) complex catalyzes ubiquitination of nuclear CGAS. As part of the ECS(RAB40C) complex, mediates ANKRD28 ubiquitination and degradation, thereby inhibiting protein phosphatase 6 (PP6) complex activity and focal adhesion assembly during cell migration. As part of some ECS complex, catalyzes 'Lys-11'-linked ubiquitination and degradation of BTRC. ECS complexes and ARIH2 collaborate in tandem to mediate ubiquitination of target proteins; ARIH2 mediating addition of the first ubiquitin on CRLs targets. Specifically catalyzes the neddylation of CUL5 via its interaction with UBE2F. Does not catalyze neddylation of other cullins (CUL1, CUL2, CUL3, CUL4A or CUL4B). May play a role in protecting cells from apoptosis induced by redox agents. In Mus musculus (Mouse), this protein is RING-box protein 2.